We begin with the raw amino-acid sequence, 159 residues long: UPF0262 protein PHZ_c2197 (159 aa).

Belongs to the UPF0262 family.

The chain is UPF0262 protein PHZ_c2197 from Phenylobacterium zucineum (strain HLK1).